Reading from the N-terminus, the 1394-residue chain is Leucine-rich PPR motif-containing protein, mitochondrial (1394 aa).

The N-terminal 59 residues, 1–59 (MAALLRSARWLLRAGAAPRLPLSLRLLPGGPGRLHAASYLPAARAGPVAGGLLSPARLY), are a transit peptide targeting the mitochondrion. 8 PPR repeats span residues 126–160 (LLRS…GAVY), 161–195 (DVSH…NIQP), 196–230 (NRVT…DLPV), 231–265 (TEAV…GIEP), 266–300 (GPDT…ELHL), 301–335 (MDRD…RRYI), 403–437 (HSFP…GFPI), and 438–472 (RPHY…GVHP). 3 positions are modified to N6-acetyllysine: Lys155, Lys187, and Lys226. Position 292 is an N6-acetyllysine (Lys292). An N6-acetyllysine mark is found at Lys463 and Lys613. PPR repeat units follow at residues 678–709 (IRDV…ESDM), 710–746 (VTGG…SAVL), 747–784 (DTGK…IKDT), 785–820 (TALS…LAEP), 821–856 (STNI…KVLP), and 954–988 (RDQM…NVIP). An interaction with BECN1 and Aedes aegypti venom allergen-1 region spans residues 712–1067 (GGYAALINLC…AKEQNIVFNA (356 aa)). An N6-acetyllysine mark is found at Lys726 and Lys750. A phosphoserine mark is found at Ser1026, Ser1027, and Ser1029. 6 PPR repeats span residues 1031 to 1065 (TEPD…NIVF), 1066 to 1102 (NAET…GFTL), 1103 to 1137 (NDAA…QQTP), 1138 to 1175 (SRLA…IGLS), 1176 to 1210 (KMVF…ENKV), and 1317 to 1351 (KEEA…NTKL). The RNA-binding stretch occupies residues 1121–1394 (KEAVTTLKTV…QLRKLRENSS (274 aa)). At Thr1136 the chain carries Phosphothreonine. Ser1138 carries the phosphoserine modification.

In terms of assembly, component of mRNP complexes associated with HNRPA1. Component of the complex, at least composed of LRPPRC, BECN1 and BCL2; the interactions prevent BECN1 from forming an autophagy-inducing complex with PIK3C3. Interacts with CECR2, HEBP2, MAP1S and UXT. Interacts with PPARGC1A. Interacts with FOXO1. Interacts (via N-terminus) with EIF4E; the interaction promotes association of EIF4E with 4ESE-containing mRNAs. Interacts with exportin XPO1/CRM1; interacts both alone and in complex with EIF4E and 4ESE-containing mRNAs to form an EIF4E-dependent mRNA export complex. Interacts with importin IPO8; the interaction occurs when LRPPRC is in its RNA-free form and returns LRPPRC to the nucleus for further export rounds. Interacts with BECN1. Interacts with Aedes aegypti venom allergen-1; the interaction interrupts BECN1 and LRPPRC association. Expressed ubiquitously. Expression is highest in heart, skeletal muscle, kidney and liver, intermediate in brain, non-mucosal colon, spleen and placenta, and lowest in small intestine, thymus, lung and peripheral blood leukocytes.

It is found in the mitochondrion. The protein localises to the nucleus. Its subcellular location is the nucleoplasm. It localises to the nucleus inner membrane. The protein resides in the nucleus outer membrane. Functionally, may play a role in RNA metabolism in both nuclei and mitochondria. In the nucleus binds to HNRPA1-associated poly(A) mRNAs and is part of nmRNP complexes at late stages of mRNA maturation which are possibly associated with nuclear mRNA export. Positively modulates nuclear export of mRNAs containing the EIF4E sensitivity element (4ESE) by binding simultaneously to both EIF4E and the 4ESE and acting as a platform for assembly for the RNA export complex. Also binds to exportin XPO1/CRM1 to engage the nuclear pore and traffic the bound mRNAs to the cytoplasm. May bind mature mRNA in the nucleus outer membrane. In mitochondria binds to poly(A) mRNA. Plays a role in translation or stability of mitochondrially encoded cytochrome c oxidase (COX) subunits. May be involved in transcription regulation. Cooperates with PPARGC1A to regulate certain mitochondrially encoded genes and gluconeogenic genes and may regulate docking of PPARGC1A to transcription factors. Seems to be involved in the transcription regulation of the multidrug-related genes MDR1 and MVP. Part of a nuclear factor that binds to the invMED1 element of MDR1 and MVP gene promoters. Binds single-stranded DNA. Required for maintaining mitochondrial potential. Suppresses the initiation of basal levels of autophagy and mitophagy by sustaining BCL2 levels. The sequence is that of Leucine-rich PPR motif-containing protein, mitochondrial (LRPPRC) from Homo sapiens (Human).